The primary structure comprises 1338 residues: MAARASADKLSTAGQDPATPVAQVAPDTSSSADGGPSNGASEPGKVGSQPVAAGAEEKVAGHDGESPRRDSHHLRRFSSKRESTVGGSGTGHSQLGKSISSVSQMHRDEHARLLPASSSMSLAPGMGYENVETEVIDRLSKSHVSLKELVETARQSDPEAFRMAVTLTEQSHPTSGKNRFASLPIEELAKEFGLKDMSTGLTEEQVLENRRRYGPNVLEKDKSEPVWKIFIQQFLSPVVLLLLVAAIASLALQEWVEGAAIFIIVTLNASLATYMEKSASNALAKLASMAAPGCVVVREGKAQTVGAVDVVPGDIVLLSTGNSVAADMRCIESVELKTNEALLTGESEDISKTLRAKDYDTPFATNLCFASTIVTNGSGRGLVFATGMETQVGRIAQQLKKAGEGSRLTPLQRGLNRLGGMIGLIAICVLIIVVVVAILTGYRDPAHPDADPVFTIVLVAVGFAVSSIPEGLPMVVTICLSLGARDMVKRKANVRKLPAVETLGCCSVICSDKTGTLTEGKMTAVRLVTVCRNGKVVDADGLTKSFGFYPTKGFDPNGGIFDYNALDEKTKSNLMLQYRDGAFQDFDAVCHNYGNPANKDPTTKLVRSVMLSGYLNSHATTLSRDPDTNRWLAKGNMSEGAIVVGAAKARFGETVAGQEMCGMHDAKADFPRVQELEVPFNSSRKMMMTVHQLPAVNYFGDICLNNTTGTKYTHCAIVKGAPDRVLQHVRYTVREGISGPSVEWEKQMTPEEIMKVEAVNLELSEQALRVLALTFRPLTDADVAALRRQAGADERLKFALGETREELVLLGVIGSVDPPRVGVREAIDRCGEAGIRVIMITGDQRPTAVAIAKDIGLLTSQDDPEQQSIQCSGLHVDDDPMNEHLPEEELDEIIARVKVFSRAQPEDKIAIVEALKRQGHTVAMTGDGVNDAPALKAADIGVAMGIAGTDVAKGASEMVLLDDNFVTIVAAVEEGRKIYSNIQKFVCFLLGTNIGEIIYLTIAIAASMPLPLEALQVLFLNLMSDGCPAVALAKEPSDDENMKIPPRPRKQPIMTRDWWLYGNLPHTIFEAGCVLMSLALGLYLCTGVVQLNPLHEQCSYFTATQLSHNKDIDYRYFCRSFEYRVTQDYTGWVTHIDFWNPKTGKMEQVLGALAGKHPNVTVETPGLAKYIVEAMSDGCPEGVDTDSETGFCMPKAGTKVSSATDTPKGSAPKDYFDVSARGAKMGRTCSFITAVWCEMLRAYTVRTWQWFFLVFNRNPWMHLACSISATLTSLLTIVPGIQSAFSTCALPWYLYLFAIGCGFVNLILDELIPKPLYRLKKAREARAALTSKAPAIMA.

Residues 1–106 (MAARASADKL…KSISSVSQMH (106 aa)) are disordered. Over residues 55 to 69 (AEEKVAGHDGESPRR) the composition is skewed to basic and acidic residues. Residues 91 to 104 (GHSQLGKSISSVSQ) show a composition bias toward polar residues. The next 8 membrane-spanning stretches (helical) occupy residues 229–249 (IFIQ…AIAS), 255–275 (WVEG…ATYM), 418–438 (LGGM…VVAI), 456–476 (IVLV…PMVV), 985–1005 (FVCF…IAIA), 1068–1088 (IFEA…CTGV), 1261–1281 (MHLA…VPGI), and 1288–1308 (CALP…NLIL).

It belongs to the cation transport ATPase (P-type) (TC 3.A.3) family.

The protein resides in the cell membrane. It carries out the reaction Na(+)(in) + ATP + H2O = Na(+)(out) + ADP + phosphate + H(+). Inhibited by cipargamin, a synthetic spiroindolone. Inhibited by pyrazoleamide PA21A050, structurally unrelated to the spiroindolones. Inhibited by (+)-SJ733, a dihydroisoquinolone compound. Functionally, sodium-exporting ATPase. Required for the extrusion of Na(+) from the parasites to maintain a low cytosolic concentration of Na(+). Required for maintaining the viability of extracellular parasites but not for intracellular growth, egress or invasion. Involved in parasite virulence. The chain is P-type sodium-transporting ATPase4 from Toxoplasma gondii (strain ATCC 50861 / VEG).